A 185-amino-acid polypeptide reads, in one-letter code: Elongation factor P (185 aa).

Belongs to the elongation factor P family.

The protein localises to the cytoplasm. The protein operates within protein biosynthesis; polypeptide chain elongation. Its function is as follows. Involved in peptide bond synthesis. Stimulates efficient translation and peptide-bond synthesis on native or reconstituted 70S ribosomes in vitro. Probably functions indirectly by altering the affinity of the ribosome for aminoacyl-tRNA, thus increasing their reactivity as acceptors for peptidyl transferase. The polypeptide is Elongation factor P (Thermosipho africanus (strain TCF52B)).